The primary structure comprises 138 residues: Venom allergen 2 (138 aa).

An N-terminal signal peptide occupies residues Met1 to Ala19.

The protein belongs to the ant venom allergen 2/4 family. Homodimer; disulfide-linked. Expressed by the venom gland.

It localises to the secreted. This Solenopsis saevissima (Fire ant) protein is Venom allergen 2.